Reading from the N-terminus, the 224-residue chain is MSFLSSVLYTLSNINMIFYIVAFLFGGIPFGWLLVKVLYKVDIRDIGSKSIGATNVYRAVKEIDESKAKYLSILTIILDATKGLIVVLGAKLLGMSYETQWSIALLAILGHCYSPYLGFKGGKGVATAIGSVLLLIPVEGICGLIIWGIVGKVFKISSISSLIGVLGTIGLTFVLPYILPLPDCISIIKQINTHTPLVLIGLFIFYTHIPNIKRLFSGEENKVL.

6 consecutive transmembrane segments (helical) span residues 14–34 (INMI…GWLL), 70–90 (YLSI…VLGA), 99–119 (TQWS…YLGF), 129–149 (IGSV…IWGI), 162–182 (LIGV…LPLP), and 185–205 (ISII…LFIF).

It belongs to the PlsY family. Probably interacts with PlsX.

It is found in the cell inner membrane. The enzyme catalyses an acyl phosphate + sn-glycerol 3-phosphate = a 1-acyl-sn-glycero-3-phosphate + phosphate. It participates in lipid metabolism; phospholipid metabolism. Catalyzes the transfer of an acyl group from acyl-phosphate (acyl-PO(4)) to glycerol-3-phosphate (G3P) to form lysophosphatidic acid (LPA). This enzyme utilizes acyl-phosphate as fatty acyl donor, but not acyl-CoA or acyl-ACP. In Helicobacter hepaticus (strain ATCC 51449 / 3B1), this protein is Glycerol-3-phosphate acyltransferase.